The chain runs to 430 residues: Probable acetate kinase (430 aa).

Asn12 is a Mg(2+) binding site. Residue Lys19 coordinates ATP. Arg100 lines the substrate pocket. Asp159 functions as the Proton donor/acceptor in the catalytic mechanism. 220 to 224 (HLGSG) provides a ligand contact to ATP. Glu416 serves as a coordination point for Mg(2+).

Belongs to the acetokinase family. It depends on Mg(2+) as a cofactor.

It catalyses the reaction acetate + ATP = acetyl phosphate + ADP. It participates in metabolic intermediate biosynthesis; acetyl-CoA biosynthesis; acetyl-CoA from acetate: step 1/2. The polypeptide is Probable acetate kinase (Cryptococcus neoformans var. neoformans serotype D (strain B-3501A) (Filobasidiella neoformans)).